A 638-amino-acid chain; its full sequence is Protein NSP-INTERACTING KINASE 1 (638 aa).

A signal peptide spans 1-31; that stretch reads MESTIVMMMMITRSFFCFLGFLCLLCSSVHG. At 32-248 the chain is on the extracellular side; it reads LLSPKGVNFE…AGGSRNHKMA (217 aa). 2 N-linked (GlcNAc...) asparagine glycosylation sites follow: Asn92 and Asn103. LRR repeat units follow at residues 104 to 128, 130 to 152, 153 to 175, and 177 to 200; these read LTNL…IGRL, RLET…VGYL, QSLQ…SLSN, and TQLA…AAKT. 5 N-linked (GlcNAc...) asparagine glycosylation sites follow: Asn162, Asn175, Asn188, Asn219, and Asn231. A helical transmembrane segment spans residues 249–269; that stretch reads IAVGSSVGTVSLIFIAVGLFL. At 270–638 the chain is on the cytoplasmic side; sequence WWRQRHNQNT…VQAMELSGPR (369 aa). Residue Thr309 is modified to Phosphothreonine. Residues 312 to 593 form the Protein kinase domain; it reads FSSKNLLGKG…EGDGLAEKWE (282 aa). 318–326 contributes to the ATP binding site; sequence LGKGGYGNV. Phosphothreonine is present on Thr335. ATP is bound at residue Lys340. A phosphoserine mark is found at Ser393 and Ser396. The tract at residues 422 to 502 is interaction with geminivirus NSP protein; that stretch reads YLHEQCDPKI…DVFGFGILLL (81 aa). Asp435 functions as the Proton acceptor in the catalytic mechanism. 3 positions are modified to phosphothreonine: Thr468, Thr469, and Thr474. Tyr482 carries the post-translational modification Phosphotyrosine. Ser484 carries the post-translational modification Phosphoserine. At Thr485 the chain carries Phosphothreonine. Phosphoserine is present on Ser489. Position 566 is a phosphothreonine (Thr566).

The protein belongs to the protein kinase superfamily. Ser/Thr protein kinase family. In terms of assembly, oligomer. Interacts with geminivirus nuclear shuttle protein (NSP). Interacts with RPL10A and RPL18B. Autophosphorylated. As to expression, expressed in seedlings, leaves, roots, stems and flowers.

It localises to the cell membrane. It carries out the reaction L-seryl-[protein] + ATP = O-phospho-L-seryl-[protein] + ADP + H(+). The enzyme catalyses L-threonyl-[protein] + ATP = O-phospho-L-threonyl-[protein] + ADP + H(+). Its activity is regulated as follows. Inhibited by the viral nuclear shuttle protein (NSP) that binds to the region required for oligomerization. Involved in defense response to geminivirus and begomovirus infection via regulation of the nuclear trafficking of RPL10A. Phosphorylates RPL10A in vitro. Activation of NIK1 down-regulates cytosolic translation. This chain is Protein NSP-INTERACTING KINASE 1, found in Arabidopsis thaliana (Mouse-ear cress).